The primary structure comprises 339 residues: MMMHELPVPIHQSPGSENHSNPASREQSKPKKETERRLPSGAKVDFGNGSGSKKQQSNQKPKKGSDSEKKKANRANSPALPNGEKPNFYNDNKEKNKKLLDPSLPNGAKPNFSFYSESNSNSNSNVSSNSNKTKKKVHEQSLPSGEKPVFHDKPNKKTSSSNRPDKNGKKGPVEETYAGSSFHSSPAALNLPKPSFQRTSPKQQANTINDENSSPSSSASSVSMSSPRPVAGAVAAPPRYPVTAYPPGSIPGAVPNVPAGYYPPQYAQPQYIQPGFTYNVNPQGYIQYQYPPFHHPLAPAQIPYQQHPFPVNAQPPAHVGSAPQGQKISFDDLLGSAKK.

2 disordered regions span residues 1–240 (MMMH…PPRY) and 309–339 (FPVN…SAKK). Over residues 13–25 (SPGSENHSNPASR) the composition is skewed to polar residues. 2 stretches are compositionally biased toward basic and acidic residues: residues 26-38 (EQSK…ERRL) and 91-100 (DNKEKNKKLL). Low complexity predominate over residues 111-131 (NFSFYSESNSNSNSNVSSNSN). Positions 163–173 (RPDKNGKKGPV) are enriched in basic and acidic residues. Residues 196–212 (FQRTSPKQQANTINDEN) are compositionally biased toward polar residues. Low complexity predominate over residues 213 to 237 (SSPSSSASSVSMSSPRPVAGAVAAP).

This sequence belongs to the EDC family.

The protein localises to the cytoplasm. MRNA-binding protein which stimulates mRNA decapping. The protein is Enhancer of mRNA-decapping protein 1 (EDC1) of Scheffersomyces stipitis (strain ATCC 58785 / CBS 6054 / NBRC 10063 / NRRL Y-11545) (Yeast).